A 109-amino-acid polypeptide reads, in one-letter code: Large ribosomal subunit protein P1 (109 aa).

The interval alanine 71 to glycine 109 is disordered. Positions alanine 80–proline 95 are enriched in basic and acidic residues. 3 tandem repeats follow at residues lysine 81–proline 85, lysine 86–proline 90, and lysine 91–proline 95. The 3 X 5 AA tandem repeats of K-K-E-E-P stretch occupies residues lysine 81–proline 95. Over residues lysine 96–glycine 109 the composition is skewed to acidic residues.

This sequence belongs to the eukaryotic ribosomal protein P1/P2 family. Not phosphorylated.

The polypeptide is Large ribosomal subunit protein P1 (RPLP1) (Tetrahymena thermophila).